The following is a 463-amino-acid chain: Putative WAS protein family homolog 3 (463 aa).

The required for WASH complex assembly stretch occupies residues 1–54 (MTPVRMQHSLAGQTYAVPLIQPDLRREEAVQQMADALQYLQKVSGDIFSRISQQ). The tract at residues 1 to 165 (MTPVRMQHSL…EGLGGLPSNI (165 aa)) is WHD1. Residue Lys-218 forms a Glycyl lysine isopeptide (Lys-Gly) (interchain with G-Cter in ubiquitin) linkage. The segment at 295-463 (QDGVLTPPPP…AEEDEDDWES (169 aa)) is disordered. The segment covering 300-312 (TPPPPPPPPPPAP) has biased composition (pro residues). A VCA region spans residues 347–463 (QGAPREVVDP…AEEDEDDWES (117 aa)). The region spanning 359–381 (GRATLLESIRQAGGIGKAKLRSM) is the WH2 domain. A compositionally biased stretch (basic and acidic residues) spans 380 to 396 (SMKERKLEKKQQKEQEQ). Gly residues predominate over residues 422–434 (SGKGPGAGEGPGG). Residues 454-463 (AEEDEDDWES) are compositionally biased toward acidic residues.

The protein belongs to the WASH1 family. In terms of assembly, component of the WASH core complex also described as WASH regulatory complex (SHRC) composed of WASH (WASHC1, WASH2P or WASH3P), WASHC2 (WASHC2A or WASHC2C), WASHC3, WASHC4 and WASHC5. The WASH core complex associates with the F-actin-capping protein dimer (formed by CAPZA1, CAPZA2 or CAPZA3 and CAPZB) in a transient or substoichiometric manner which was initially described as WASH complex. Interacts (via WHD1 region) with WASHC2C; the interaction is direct. Interacts with alpha-tubulin. Interacts with BECN1; WASHC1 and AMBRA1 can competitively interact with BECN1. Interacts with BLOC1S2; may associate with the BLOC-1 complex. Interacts with tubulin gamma chain (TUBG1 or TUBG2). Interacts with EXOC1, EXOC4, EXOC8; in MMP14-positive endosomes in breast tumor cells; indicative for an association with the exocyst complex.

The protein resides in the early endosome. It localises to the early endosome membrane. It is found in the recycling endosome membrane. Its subcellular location is the cell projection. The protein localises to the lamellipodium. The protein resides in the filopodium. It localises to the cytoplasmic vesicle. It is found in the autophagosome. Its subcellular location is the cytoplasm. The protein localises to the cytoskeleton. The protein resides in the microtubule organizing center. It localises to the centrosome. It is found in the centriole. Acts as a nucleation-promoting factor at the surface of endosomes, where it recruits and activates the Arp2/3 complex to induce actin polymerization, playing a key role in the fission of tubules that serve as transport intermediates during endosome sorting. Involved in endocytic trafficking of EGF. Involved in transferrin receptor recycling. Regulates the trafficking of endosomal alpha5beta1 integrin to the plasma membrane and involved in invasive cell migration. In T-cells involved in endosome-to-membrane recycling of receptors including T-cell receptor (TCR), CD28 and ITGAL; proposed to be implicated in T cell proliferation and effector function. In dendritic cells involved in endosome-to-membrane recycling of major histocompatibility complex (MHC) class II probably involving retromer and subsequently allowing antigen sampling, loading and presentation during T-cell activation. Involved in Arp2/3 complex-dependent actin assembly driving Salmonella typhimurium invasion independent of ruffling. Involved in the exocytosis of MMP14 leading to matrix remodeling during invasive migration and implicating late endosome-to-plasma membrane tubular connections and cooperation with the exocyst complex. Involved in negative regulation of autophagy independently from its role in endosomal sorting by inhibiting BECN1 ubiquitination to inactivate PIK3C3/Vps34 activity. This is Putative WAS protein family homolog 3 (WASH3P) from Homo sapiens (Human).